The following is an 890-amino-acid chain: DNA mismatch repair protein MutS (890 aa).

The span at 1–13 (MDKGINLQNDKEP) shows a compositional bias: basic and acidic residues. The tract at residues 1-23 (MDKGINLQNDKEPSPMAEGNPAD) is disordered. Position 649 to 656 (649 to 656 (GPNMGGKS)) interacts with ATP.

This sequence belongs to the DNA mismatch repair MutS family.

Functionally, this protein is involved in the repair of mismatches in DNA. It is possible that it carries out the mismatch recognition step. This protein has a weak ATPase activity. This is DNA mismatch repair protein MutS from Paracidovorax citrulli (strain AAC00-1) (Acidovorax citrulli).